The following is a 412-amino-acid chain: Multifunctional CCA protein (412 aa).

Residues Gly8 and Arg11 each contribute to the ATP site. CTP-binding residues include Gly8 and Arg11. 2 residues coordinate Mg(2+): Asp21 and Asp23. Residues Arg91, Arg137, and Arg140 each contribute to the ATP site. Residues Arg91, Arg137, and Arg140 each contribute to the CTP site. Residues 226 to 327 (TGIHTMMVID…VTLFEKTDAL (102 aa)) form the HD domain.

Belongs to the tRNA nucleotidyltransferase/poly(A) polymerase family. Bacterial CCA-adding enzyme type 1 subfamily. Monomer. Can also form homodimers and oligomers. It depends on Mg(2+) as a cofactor. Ni(2+) serves as cofactor.

It catalyses the reaction a tRNA precursor + 2 CTP + ATP = a tRNA with a 3' CCA end + 3 diphosphate. The enzyme catalyses a tRNA with a 3' CCA end + 2 CTP + ATP = a tRNA with a 3' CCACCA end + 3 diphosphate. Catalyzes the addition and repair of the essential 3'-terminal CCA sequence in tRNAs without using a nucleic acid template. Adds these three nucleotides in the order of C, C, and A to the tRNA nucleotide-73, using CTP and ATP as substrates and producing inorganic pyrophosphate. tRNA 3'-terminal CCA addition is required both for tRNA processing and repair. Also involved in tRNA surveillance by mediating tandem CCA addition to generate a CCACCA at the 3' terminus of unstable tRNAs. While stable tRNAs receive only 3'-terminal CCA, unstable tRNAs are marked with CCACCA and rapidly degraded. In Dechloromonas aromatica (strain RCB), this protein is Multifunctional CCA protein.